The following is a 205-amino-acid chain: Small ribosomal subunit protein uS4 (205 aa).

An S4 RNA-binding domain is found at 95-163 (RRLDNVVYRL…FKENLESRDP (69 aa)).

The protein belongs to the universal ribosomal protein uS4 family. In terms of assembly, part of the 30S ribosomal subunit. Contacts protein S5. The interaction surface between S4 and S5 is involved in control of translational fidelity.

One of the primary rRNA binding proteins, it binds directly to 16S rRNA where it nucleates assembly of the body of the 30S subunit. Functionally, with S5 and S12 plays an important role in translational accuracy. This Persephonella marina (strain DSM 14350 / EX-H1) protein is Small ribosomal subunit protein uS4.